We begin with the raw amino-acid sequence, 1730 residues long: SH3 and multiple ankyrin repeat domains protein 3 (1730 aa).

The interval 1 to 75 (MDGPGASAVV…KFLDEERLLQ (75 aa)) is intramolecular interaction with the ANK repeats. Tyr-122 bears the Phosphotyrosine mark. 6 ANK repeats span residues 148–178 (SGEC…HLDF), 182–211 (DGLT…SPDY), 215–245 (RGLT…QLGT), 249–278 (NGWQ…NMGA), 282–311 (SGNT…NKDV), and 315–345 (NSQT…DVVP). Positions 354 to 466 (KRRRLAGPSG…PPPRGPKRKL (113 aa)) are disordered. Phosphoserine occurs at positions 373, 375, 387, and 394. Over residues 404–415 (LQEEKDRDRDGE) the composition is skewed to basic and acidic residues. The span at 444 to 460 (APGPGPASPAPPAPPPR) shows a compositional bias: pro residues. The 60-residue stretch at 470–529 (VPGRKFIAVKAHSPQGEGEIPLHRGEAVKVLSIGEGGFWEGTVKGRTGWFPADCVEEVQM) folds into the SH3 domain. Position 482 is a phosphoserine (Ser-482). A Phosphotyrosine modification is found at Tyr-555. Positions 570-664 (VAILQKRDHE…RLVMKVVSVT (95 aa)) constitute a PDZ domain. Positions 664–688 (TRKPEEDGARRRAPPPPKRAPSTTL) are disordered. Residues 677 to 684 (PPPPKRAP) form a required for interaction with ABI1 region. Phosphoserine occurs at positions 694, 781, 790, and 801. Disordered regions lie at residues 760-1460 (QGLP…AAGP) and 1475-1524 (GDPV…SLLD). A compositionally biased stretch (pro residues) spans 812–844 (IPPPPQTAPPPPPAPYYFDSGPPPTFSPPPPPG). Over residues 857-869 (GLEARLGAGAAGL) the composition is skewed to low complexity. Phosphoserine occurs at positions 890 and 897. The residue at position 912 (Thr-912) is a Phosphothreonine. Tyr-930 is modified (phosphotyrosine). Arg-965 carries the asymmetric dimethylarginine modification. Ser-995 carries the post-translational modification Phosphoserine. A compositionally biased stretch (basic and acidic residues) spans 1016 to 1026 (VKERRLEERRR). A compositionally biased stretch (low complexity) spans 1078–1092 (LKPLVGGPSLGPSGS). The span at 1122–1131 (SQTPSRSPTP) shows a compositional bias: polar residues. Thr-1130 is modified (phosphothreonine). Ser-1134, Ser-1159, Ser-1163, and Ser-1166 each carry phosphoserine. The segment covering 1174 to 1194 (ARREAEKPPREERKSPEDKKS) has biased composition (basic and acidic residues). Thr-1234 is modified (phosphothreonine). Residues 1235-1250 (PELAPAPMQAAAVAEP) show a composition bias toward low complexity. Pro residues-rich tracts occupy residues 1251 to 1261 (MPSPRAQPPGS) and 1321 to 1333 (TPPP…PTTV). Position 1253 is a phosphoserine (Ser-1253). Basic and acidic residues predominate over residues 1360-1370 (ADTRSSSDPHL). Residues 1371–1392 (ETTSTISTVSSMSTLSSESGEL) are compositionally biased toward low complexity. Residues 1410–1416 (PPVPPKP) carry the SH3-binding motif. Ser-1420 bears the Phosphoserine mark. Residues 1494-1514 (ISELSSRLQQLNKDTRSLGEE) are a coiled coil. Positions 1495–1505 (SELSSRLQQLN) are enriched in polar residues. A phosphoserine mark is found at Ser-1510, Ser-1521, Ser-1529, and Ser-1539. Disordered regions lie at residues 1546–1584 (ISAQ…PASL) and 1627–1663 (VRSV…QQKP). Residues 1627-1637 (VRSVSARSRSP) show a composition bias toward low complexity. Residues Ser-1634, Ser-1636, and Ser-1638 each carry the phosphoserine modification. A compositionally biased stretch (pro residues) spans 1638 to 1648 (SPSPLPSPSPG). Residues 1649 to 1658 (SGPSAGPRRP) are compositionally biased toward low complexity. Positions 1667-1730 (WSKFDVGDWL…ERALRQLDGS (64 aa)) constitute an SAM domain.

The protein belongs to the SHANK family. May homomultimerize via its SAM domain. Interacts with BAIAP2, DBNL and SLC17A7/VGLUT1. Interacts with DLGAP1/GKAP, GRM1/MGLUR1, GRM5/MGLUR5 and LZTS3 C-termini via its PDZ domain. Interacts with ABI1, HOMER1, HOMER2, HOMER3 and CTTN/cortactin SH3 domain. Is part of a complex with DLG4/PSD-95 and DLGAP1/GKAP. Interacts (via PDZ domain) with the GRIA1 subunit of the AMPA receptor (via PDZ-binding motif). Interacts with WASF1 and CYFIP2; the interactions mediate the association of SHANK3 with the WAVE1 complex. Interacts with ARPC2; the interaction probably mediates the association of SHANK3 with the Arp2/3 complex. Interacts (via ANK repeats) with SHARPIN and SPTAN1. Interacts (via PDZ domain) with ARHGAP44 (probably via PDZ-binding motif); the interaction takes place in dendritic spines and promotes GRIA1 exocytosis. Interacts with CAMK2A. Interacts with DIP2A. Interacts with ADGRL3. As to expression, in brain, highly expressed in striatum, thalamus, hippocampus and granule cells of the cerebellum.

Its subcellular location is the cytoplasm. The protein resides in the synapse. It is found in the postsynaptic density. It localises to the cell projection. The protein localises to the dendritic spine. Its function is as follows. Major scaffold postsynaptic density protein which interacts with multiple proteins and complexes to orchestrate the dendritic spine and synapse formation, maturation and maintenance. Interconnects receptors of the postsynaptic membrane including NMDA-type and metabotropic glutamate receptors via complexes with GKAP/PSD-95 and HOMER, respectively, and the actin-based cytoskeleton. Plays a role in the structural and functional organization of the dendritic spine and synaptic junction through the interaction with Arp2/3 and WAVE1 complex as well as the promotion of the F-actin clusters. By way of this control of actin dynamics, participates in the regulation of developing neurons growth cone motility and the NMDA receptor-signaling. Also modulates GRIA1 exocytosis and GRM5/MGLUR5 expression and signaling to control the AMPA and metabotropic glutamate receptor-mediated synaptic transmission and plasticity. May be required at an early stage of synapse formation and be inhibited by IGF1 to promote synapse maturation. In Mus musculus (Mouse), this protein is SH3 and multiple ankyrin repeat domains protein 3 (Shank3).